We begin with the raw amino-acid sequence, 516 residues long: Gamma-aminobutyrate transaminase 1, mitochondrial (516 aa).

The transit peptide at 1 to 47 directs the protein to the mitochondrion; sequence MVIARGLLRSNASSSSSQAINLLKYVTSTGSLQGHTQNLCDASTRHF. Residues 45 to 60 show a composition bias toward polar residues; it reads RHFSSVPSPQSNSTEE. A disordered region spans residues 45–64; it reads RHFSSVPSPQSNSTEENGFK. 171–172 is a pyridoxal 5'-phosphate binding site; it reads GS. Tyr204 contacts substrate. Position 311 (Asp311) interacts with pyridoxal 5'-phosphate. A substrate-binding site is contributed by Lys340. Lys340 carries the post-translational modification N6-(pyridoxal phosphate)lysine.

This sequence belongs to the class-III pyridoxal-phosphate-dependent aminotransferase family.

The protein localises to the mitochondrion. It catalyses the reaction 4-aminobutanoate + pyruvate = succinate semialdehyde + L-alanine. The catalysed reaction is 4-aminobutanoate + glyoxylate = succinate semialdehyde + glycine. Functionally, transaminase that degrades gamma-amino butyric acid (GABA) and uses pyruvate as amino-group acceptor, but not 2-oxoglutarate. This chain is Gamma-aminobutyrate transaminase 1, mitochondrial, found in Oryza sativa subsp. indica (Rice).